We begin with the raw amino-acid sequence, 724 residues long: Probable serine/threonine-protein kinase KKQ8 (724 aa).

2 disordered regions span residues 1–81 (MVMQ…RQRS) and 93–188 (HPFR…KDIL). Residue serine 19 is modified to Phosphoserine. Residues 45–54 (PYRSSSTSPK) show a composition bias toward low complexity. A compositionally biased stretch (polar residues) spans 95-106 (FRQTGSGASNSP). Residues 143 to 162 (RSSSVSSCDSSNGTTSSSDS) show a composition bias toward low complexity. A phosphoserine mark is found at serine 232, serine 238, and serine 241. Composition is skewed to polar residues over residues 318-329 (NASSLLPNVEKS) and 338-351 (GQSP…SPTQ). A disordered region spans residues 318–355 (NASSLLPNVEKSQTNHEKRTGQSPNDSNRSSPTQGRED). A Protein kinase domain is found at 412-712 (GHPVGLVGAG…VGKLLDMQWM (301 aa)). ATP-binding positions include 418–426 (VGAGAYGEV) and lysine 455. Residue aspartate 563 is the Proton acceptor of the active site.

It belongs to the protein kinase superfamily. CAMK Ser/Thr protein kinase family. NPR/HAL subfamily. HAL5 sub-subfamily.

The protein resides in the cytoplasm. The catalysed reaction is L-seryl-[protein] + ATP = O-phospho-L-seryl-[protein] + ADP + H(+). It carries out the reaction L-threonyl-[protein] + ATP = O-phospho-L-threonyl-[protein] + ADP + H(+). This chain is Probable serine/threonine-protein kinase KKQ8 (KKQ8), found in Saccharomyces cerevisiae (strain YJM789) (Baker's yeast).